The sequence spans 440 residues: Protein root UVB sensitive 3 (440 aa).

Transmembrane regions (helical) follow at residues Ile109–Phe129, Ile154–Cys174, and Phe232–Met252.

The protein belongs to the RUS1 family.

The protein resides in the membrane. This Arabidopsis thaliana (Mouse-ear cress) protein is Protein root UVB sensitive 3.